The chain runs to 821 residues: Centrosomal protein of 95 kDa (821 aa).

Disordered stretches follow at residues 310-354 (TLCK…FPQK), 390-474 (ATGE…DTHH), and 514-550 (KEAF…SSKA). Composition is skewed to basic and acidic residues over residues 325-340 (ESSK…RSEN) and 390-410 (ATGE…HSAN). Positions 427–441 (RKPRPGFSMHRKAPY) are enriched in basic residues. S445, S447, and S449 each carry phosphoserine. Coiled-coil stretches lie at residues 578–627 (LTKM…VKKE) and 695–789 (LQIQ…DDDA).

The protein resides in the cytoplasm. It localises to the cytoskeleton. Its subcellular location is the microtubule organizing center. The protein localises to the centrosome. It is found in the spindle pole. The polypeptide is Centrosomal protein of 95 kDa (Cep95) (Rattus norvegicus (Rat)).